The sequence spans 414 residues: Esterase FrsA (414 aa).

Belongs to the FrsA family.

It catalyses the reaction a carboxylic ester + H2O = an alcohol + a carboxylate + H(+). In terms of biological role, catalyzes the hydrolysis of esters. The protein is Esterase FrsA of Escherichia coli O7:K1 (strain IAI39 / ExPEC).